Consider the following 184-residue polypeptide: MMSQTAKVLLLYAHPESQDSVANRVLLKPALQLPNVTVHDLYAHYPDFFIDISHEQALLRDHDVIVFQFPLYTYSCPALLKEWFDRVLSRGFASGVGGNQLAGKYWRCVITTGEPETAYRPDGFNRYALSDILRPFELTAAMCRMHWMTPLIIYWARRQSLSELASHGRAYERWLADPLTPGGF.

It belongs to the NAD(P)H dehydrogenase (quinone) family. KefG subfamily. Interacts with KefB.

Its subcellular location is the cell inner membrane. The enzyme catalyses a quinone + NADH + H(+) = a quinol + NAD(+). It catalyses the reaction a quinone + NADPH + H(+) = a quinol + NADP(+). Regulatory subunit of a potassium efflux system that confers protection against electrophiles. Required for full activity of KefB. The chain is Glutathione-regulated potassium-efflux system ancillary protein KefG from Cronobacter sakazakii (strain ATCC BAA-894) (Enterobacter sakazakii).